The sequence spans 363 residues: Putative replication factor C small subunit L510 (363 aa).

Residue 47–54 (GPPGTGKT) coordinates ATP.

Belongs to the activator 1 small subunits family. RfcS subfamily.

Part of the RFC clamp loader complex which loads the PCNA sliding clamp onto DNA. This chain is Putative replication factor C small subunit L510, found in Acanthamoeba polyphaga mimivirus (APMV).